Reading from the N-terminus, the 87-residue chain is Cell division topological specificity factor (87 aa).

Belongs to the MinE family.

Prevents the cell division inhibition by proteins MinC and MinD at internal division sites while permitting inhibition at polar sites. This ensures cell division at the proper site by restricting the formation of a division septum at the midpoint of the long axis of the cell. The chain is Cell division topological specificity factor from Vibrio parahaemolyticus serotype O3:K6 (strain RIMD 2210633).